A 1056-amino-acid chain; its full sequence is Sucrose-phosphate synthase (1056 aa).

The segment covering 112–123 has biased composition (basic and acidic residues); sequence HVERERGRREAT. The disordered stretch occupies residues 112-132; the sequence is HVERERGRREATADMSEDLSE. A phosphoserine mark is found at Ser158 and Ser424. A disordered region spans residues 681-700; it reads NWQRIDEGSENSDTDSAGDS.

It belongs to the glycosyltransferase 1 family. As to quaternary structure, homodimer or homotetramer. Post-translationally, phosphorylated at Ser-158 and Ser-424.

The enzyme catalyses beta-D-fructose 6-phosphate + UDP-alpha-D-glucose = sucrose 6(F)-phosphate + UDP + H(+). The protein operates within glycan biosynthesis; sucrose biosynthesis; sucrose from D-fructose 6-phosphate and UDP-alpha-D-glucose: step 1/2. With respect to regulation, activity is regulated by phosphorylation and moderated by concentration of metabolites and light. In terms of biological role, plays a role in photosynthetic sucrose synthesis by catalyzing the rate-limiting step of sucrose biosynthesis from UDP-glucose and fructose- 6-phosphate. Involved in the regulation of carbon partitioning in the leaves of plants. May regulate the synthesis of sucrose and therefore play a major role as a limiting factor in the export of photoassimilates out of the leaf. Plays a role for sucrose availability that is essential for plant growth and fiber elongation. The polypeptide is Sucrose-phosphate synthase (SPS1) (Spinacia oleracea (Spinach)).